The sequence spans 1488 residues: WD repeat-containing protein 7 (1488 aa).

7 WD repeats span residues 17–56 (APTH…EVNP), 62–104 (GHTA…CIEF), 156–199 (ISPD…SGLQ), 324–366 (VICP…DKQE), 404–443 (NEPL…IVQL), 462–507 (GHRN…MKHI), and 558–597 (RHLF…LDRC). Disordered regions lie at residues 761 to 781 (EEED…PEYR) and 911 to 947 (GDHM…QGQI). Positions 768-781 (VMRQRREESDPEYR) are enriched in basic and acidic residues. Position 935 is a phosphoserine (Ser-935). The span at 937–947 (PASSNIVQGQI) shows a compositional bias: polar residues. WD repeat units lie at residues 1349–1388 (PAIC…CQTI) and 1390–1430 (GHKG…LGSI). A Phosphoserine modification is found at Ser-1454.

The polypeptide is WD repeat-containing protein 7 (Wdr7) (Rattus norvegicus (Rat)).